The following is a 327-amino-acid chain: Phenylalanine--tRNA ligase alpha subunit (327 aa).

Glu-252 serves as a coordination point for Mg(2+).

The protein belongs to the class-II aminoacyl-tRNA synthetase family. Phe-tRNA synthetase alpha subunit type 1 subfamily. Tetramer of two alpha and two beta subunits. The cofactor is Mg(2+).

It is found in the cytoplasm. The enzyme catalyses tRNA(Phe) + L-phenylalanine + ATP = L-phenylalanyl-tRNA(Phe) + AMP + diphosphate + H(+). The chain is Phenylalanine--tRNA ligase alpha subunit from Aeromonas hydrophila subsp. hydrophila (strain ATCC 7966 / DSM 30187 / BCRC 13018 / CCUG 14551 / JCM 1027 / KCTC 2358 / NCIMB 9240 / NCTC 8049).